The sequence spans 305 residues: D-alanine--D-alanine ligase (305 aa).

One can recognise an ATP-grasp domain in the interval 107 to 299 (KVIFASAGLK…FGELVLRILQ (193 aa)). 134–185 (PLPVVVKPSREGSSVGVGIVRDPSRMQAALDEAFRYDSEILIEGFIDGREVQ) lines the ATP pocket. Mg(2+)-binding residues include D253, E266, and N268.

Belongs to the D-alanine--D-alanine ligase family. The cofactor is Mg(2+). Requires Mn(2+) as cofactor.

It is found in the cytoplasm. It carries out the reaction 2 D-alanine + ATP = D-alanyl-D-alanine + ADP + phosphate + H(+). It functions in the pathway cell wall biogenesis; peptidoglycan biosynthesis. Functionally, cell wall formation. This chain is D-alanine--D-alanine ligase, found in Citrifermentans bemidjiense (strain ATCC BAA-1014 / DSM 16622 / JCM 12645 / Bem) (Geobacter bemidjiensis).